A 341-amino-acid polypeptide reads, in one-letter code: Eukaryotic translation initiation factor 2 subunit 1 (341 aa).

The 72-residue stretch at 16–87 folds into the S1 motif domain; that stretch reads EDVVMVNVLS…EKGYIDLSKR (72 aa). Phosphoserine is present on serine 51. Residues 293-341 are disordered; it reads AENAQVAGDDDEEDGADQEGMQFDPEKEFNHKGSGAGRANEEDEEEEED. Over residues 300–309 the composition is skewed to acidic residues; it reads GDDDEEDGAD.

This sequence belongs to the eIF-2-alpha family. Eukaryotic translation initiation factor 2 eIF2 is a heterotrimeric complex composed of an alpha, a beta and a gamma subunit. Phosphorylation of eIF-2-alpha impairs the recycling of eIF-2 between successive rounds of initiation and thus leads to inhibition of translation.

The protein resides in the cytoplasm. It is found in the cytosol. Functionally, eIF-2 functions in the early steps of protein synthesis by forming a ternary complex with GTP and initiator tRNA. This pre-initiation complex mediates ribosomal recognition of a start codon during the scanning process of the leader region. This Drosophila melanogaster (Fruit fly) protein is Eukaryotic translation initiation factor 2 subunit 1.